We begin with the raw amino-acid sequence, 538 residues long: MAEKLSDGSSIISVHPRPSKGFSSKLLDLLERLVVKLMHDASLPLHYLSGNFAPIRDETPPVKDLPVHGFLPECLNGEFVRVGPNPKFDAVAGYHWFDGDGMIHGVRIKDGKATYVSRYVKTSRLKQEEFFGAAKFMKIGDLKGFFGLLMVNVQQLRTKLKILDNTYGNGTANTALVYHHGKLLALQEADKPYVIKVLEDGDLQTLGIIDYDKRLTHSFTAHPKVDPVTGEMFTFGYSHTPPYLTYRVISKDGIMHDPVPITISEPIMMHDFAITETYAIFMDLPMHFRPKEMVKEKKMIYSFDPTKKARFGVLPRYAKDELMIRWFELPNCFIFHNANAWEEEDEVVLITCRLENPDLDMVSGKVKEKLENFGNELYEMRFNMKTGSASQKKLSASAVDFPRINECYTGKKQRYVYGTILDSIAKVTGIIKFDLHAEAETGKRMLEVGGNIKGIYDLGEGRYGSEAIYVPRETAEEDDGYLIFFVHDENTGKSCVTVIDAKTMSAEPVAVVELPHRVPYGFHALFVTEEQLQEQTLI.

Fe cation contacts are provided by H222, H270, H336, and H523.

Belongs to the carotenoid oxygenase family. Homodimer. Fe(2+) serves as cofactor. High expression in flowers and siliques. Also detected in stems, leaves and roots.

Its subcellular location is the cytoplasm. The catalysed reaction is all-trans-zeaxanthin + 2 O2 = 4,9-dimethyldodeca-2,4,6,8,10-pentaenedial + 2 (3R)-hydroxy-beta-ionone. Cleaves a variety of carotenoids symmetrically at both the 9-10 and 9'-10' double bonds. Active on beta,beta-carotene, lutein, zeaxanthin, all-trans-violaxanthin, 9-cis-violaxanthin and 9'-cis-neoxanthin. With most substrates, the carotenoid is symmetrically cleaved. Probably not involved in abscisic acid biosynthesis. This is Carotenoid 9,10(9',10')-cleavage dioxygenase 1 (CCD1) from Arabidopsis thaliana (Mouse-ear cress).